Here is a 645-residue protein sequence, read N- to C-terminus: Beta-galactosidase (645 aa).

R102 lines the substrate pocket. Zn(2+) is bound at residue C106. N140 serves as a coordination point for substrate. E141 serves as the catalytic Proton donor. Zn(2+)-binding residues include C150, C152, and C155. E312 (nucleophile) is an active-site residue. Residues W320 and E360–H363 each bind substrate.

The protein belongs to the glycosyl hydrolase 42 family. As to quaternary structure, homotrimer.

The catalysed reaction is Hydrolysis of terminal non-reducing beta-D-galactose residues in beta-D-galactosides.. Inhibited by Cu(2+) and Fe(2+), and moderately activated by divalent cations such as Co(2+), Mn(2+) and Zn(2+). Considerably activated by dithiothreitol, beta-mercaptoethanol and cysteine. In Thermus thermophilus, this protein is Beta-galactosidase.